Here is a 704-residue protein sequence, read N- to C-terminus: DNA ligase (704 aa).

NAD(+) is bound by residues 43 to 47 (DADYD), 92 to 93 (SL), and Glu124. The active-site N6-AMP-lysine intermediate is Lys126. Residues Arg147, Glu182, Lys298, and Lys322 each coordinate NAD(+). Zn(2+) contacts are provided by Cys427, Cys430, Cys445, and Cys451. In terms of domain architecture, BRCT spans 625–704 (PVASPVAGKI…DGWLRLIGDA (80 aa)).

Belongs to the NAD-dependent DNA ligase family. LigA subfamily. It depends on Mg(2+) as a cofactor. Requires Mn(2+) as cofactor.

It catalyses the reaction NAD(+) + (deoxyribonucleotide)n-3'-hydroxyl + 5'-phospho-(deoxyribonucleotide)m = (deoxyribonucleotide)n+m + AMP + beta-nicotinamide D-nucleotide.. DNA ligase that catalyzes the formation of phosphodiester linkages between 5'-phosphoryl and 3'-hydroxyl groups in double-stranded DNA using NAD as a coenzyme and as the energy source for the reaction. It is essential for DNA replication and repair of damaged DNA. The chain is DNA ligase from Cereibacter sphaeroides (strain ATCC 17023 / DSM 158 / JCM 6121 / CCUG 31486 / LMG 2827 / NBRC 12203 / NCIMB 8253 / ATH 2.4.1.) (Rhodobacter sphaeroides).